Here is a 275-residue protein sequence, read N- to C-terminus: 6-deoxy-6-sulfo-D-fructose transketolase subunit SqwG (275 aa).

This sequence belongs to the transketolase family. In terms of assembly, forms a complex with SqwH. It depends on thiamine diphosphate as a cofactor.

The catalysed reaction is 6-deoxy-6-sulfo-D-fructose + D-glyceraldehyde 3-phosphate = 4-deoxy-4-sulfo-D-erythrose + D-xylulose 5-phosphate. It catalyses the reaction 4-deoxy-4-sulfo-D-erythrulose + D-glyceraldehyde 3-phosphate = sulfoacetaldehyde + D-xylulose 5-phosphate. Its function is as follows. Part of the sulfo-TK pathway, a D-sulfoquinovose degradation pathway that produces 2-hydroxyethane-1-sulfonate (isethionate). Catalyzes two steps of the pathway: the formation of 4-deoxy-4-sulfoerythrose (SE) and xylulose 5-phosphate from 6-deoxy-6-sulfo-D-fructose (SF) and glyceraldehyde 3-phosphate, and the formation of sulfoacetaldehyde (SA) and xylulose 5-phosphate from 4-deoxy-4-sulfo-D-erythrulose (SEu) and glyceraldehyde 3-phosphate. In Clostridium sp. (strain MSTE9), this protein is 6-deoxy-6-sulfo-D-fructose transketolase subunit SqwG.